The sequence spans 116 residues: Aspartate 1-decarboxylase (116 aa).

Serine 25 acts as the Schiff-base intermediate with substrate; via pyruvic acid in catalysis. The residue at position 25 (serine 25) is a Pyruvic acid (Ser). A substrate-binding site is contributed by threonine 57. Catalysis depends on tyrosine 58, which acts as the Proton donor. 73–75 (GAA) lines the substrate pocket.

Belongs to the PanD family. In terms of assembly, heterooctamer of four alpha and four beta subunits. Pyruvate is required as a cofactor. Is synthesized initially as an inactive proenzyme, which is activated by self-cleavage at a specific serine bond to produce a beta-subunit with a hydroxyl group at its C-terminus and an alpha-subunit with a pyruvoyl group at its N-terminus.

The protein resides in the cytoplasm. It catalyses the reaction L-aspartate + H(+) = beta-alanine + CO2. It functions in the pathway cofactor biosynthesis; (R)-pantothenate biosynthesis; beta-alanine from L-aspartate: step 1/1. Its function is as follows. Catalyzes the pyruvoyl-dependent decarboxylation of aspartate to produce beta-alanine. The sequence is that of Aspartate 1-decarboxylase from Parabacteroides distasonis (strain ATCC 8503 / DSM 20701 / CIP 104284 / JCM 5825 / NCTC 11152).